A 132-amino-acid polypeptide reads, in one-letter code: Small ribosomal subunit protein uS8 (132 aa).

It belongs to the universal ribosomal protein uS8 family. In terms of assembly, part of the 30S ribosomal subunit. Contacts proteins S5 and S12.

One of the primary rRNA binding proteins, it binds directly to 16S rRNA central domain where it helps coordinate assembly of the platform of the 30S subunit. The protein is Small ribosomal subunit protein uS8 of Clostridium botulinum (strain 657 / Type Ba4).